A 293-amino-acid polypeptide reads, in one-letter code: Elongation factor Ts (293 aa).

Residues 80 to 83 (TDFV) form an involved in Mg(2+) ion dislocation from EF-Tu region.

This sequence belongs to the EF-Ts family.

Its subcellular location is the cytoplasm. Its function is as follows. Associates with the EF-Tu.GDP complex and induces the exchange of GDP to GTP. It remains bound to the aminoacyl-tRNA.EF-Tu.GTP complex up to the GTP hydrolysis stage on the ribosome. This is Elongation factor Ts from Burkholderia cenocepacia (strain HI2424).